The following is a 729-amino-acid chain: Solute carrier family 15 member 2 (729 aa).

Residues 1–34 form a disordered region; sequence MNPFQQNESKETLFSPVSTEETPPRLSSPAKKTP. The Cytoplasmic portion of the chain corresponds to 1–57; the sequence is MNPFQQNESKETLFSPVSTEETPPRLSSPAKKTPPKICGSNYPLSIAFIVVNEFCER. Ser-9 bears the Phosphoserine mark. Thr-12 bears the Phosphothreonine mark. Position 28 is a phosphoserine (Ser-28). Residues 58-78 form a helical membrane-spanning segment; that stretch reads FSYYGMKAVLTLYFLYFLHWN. Topologically, residues 79 to 87 are extracellular; that stretch reads EDTSTSVYH. The chain crosses the membrane as a helical span at residues 88 to 108; sequence AFSSLCYFTPILGAAIADSWL. The Cytoplasmic portion of the chain corresponds to 109–113; that stretch reads GKFKT. A helical transmembrane segment spans residues 114–134; the sequence is IIYLSLVNVLGHVIKSLSAFP. The Extracellular portion of the chain corresponds to 135–139; that stretch reads ILGGK. Residues 140–160 form a helical membrane-spanning segment; the sequence is VVHTVLSLVGLCLIALGTGGI. At 161-183 the chain is on the cytoplasmic side; it reads KPCVAAFGGDQFEEKHAEERTRY. Residues 184 to 204 form a helical membrane-spanning segment; that stretch reads FSGFYLAINAGSLISTFITPM. Over 205–217 the chain is Extracellular; the sequence is LRGDVQCFGEDCY. The helical transmembrane segment at 218-238 threads the bilayer; it reads ALAFGVPGLLMVIALVVFAMG. Over 239 to 295 the chain is Cytoplasmic; sequence SKMYKKPPPEGNIVAQVVKCIWFAISNRFKNRSEDIPKRQHWLDWAAEKYPKQLIMD. A helical membrane pass occupies residues 296–316; the sequence is VKTLTRVLFLYIPLPMFWALL. Residues 317-343 are Extracellular-facing; sequence DQQGSRWTLQATKMNGNLGFFVLQPDQ. The chain crosses the membrane as a helical span at residues 344–364; that stretch reads MQVLNPLLVLIFIPLFDLVIY. Residues 365-380 lie on the Cytoplasmic side of the membrane; that stretch reads RLISKCGINFTSLRKM. The chain crosses the membrane as a helical span at residues 381–401; sequence AVGMVLACLAFAAAATVEIKI. Topologically, residues 402-611 are extracellular; the sequence is NEMAPPQPGS…PANKVSIAWQ (210 aa). The interval 402–611 is extracellular domain (ECD); sequence NEMAPPQPGS…PANKVSIAWQ (210 aa). N-linked (GlcNAc...) asparagine glycans are attached at residues Asn-435, Asn-472, Asn-508, Asn-528, and Asn-587. Residues 612–632 traverse the membrane as a helical segment; the sequence is LPQYALVTAGEVMFSVTGLEF. Residues 633 to 643 lie on the Cytoplasmic side of the membrane; sequence SYSQAPSSMKS. The chain crosses the membrane as a helical span at residues 644–664; the sequence is VLQAAWLLTVAIGNIIVLVVA. Over 665–674 the chain is Extracellular; sequence QFSGLVQWAE. The chain crosses the membrane as a helical span at residues 675–695; the sequence is FVLFSCLLLVVCLIFSIMGYY. Topologically, residues 696–729 are cytoplasmic; it reads YIPIKSEDIQGPEDKQIPHMQGNMINLETKKTKL.

This sequence belongs to the major facilitator superfamily. Proton-dependent oligopeptide transporter (POT/PTR) (TC 2.A.17) family. As to quaternary structure, interacts (via extracellular domain region) with trypsin. In terms of tissue distribution, strongly expressed in kidney. Also detected in brain, lung, liver and heart.

Its subcellular location is the apical cell membrane. The protein resides in the cytoplasmic vesicle. It is found in the phagosome membrane. It localises to the cell membrane. It catalyses the reaction a dipeptide(out) + 2 H(+)(out) = a dipeptide(in) + 2 H(+)(in). The enzyme catalyses N-acetyl-D-muramoyl-L-alanyl-D-isoglutamine(out) + 3 H(+)(out) = N-acetyl-D-muramoyl-L-alanyl-D-isoglutamine(in) + 3 H(+)(in). The catalysed reaction is glycyl-L-leucine(out) + 2 H(+)(out) = glycyl-L-leucine(in) + 2 H(+)(in). It carries out the reaction glycyl-L-lysine(out) + 2 H(+)(out) = glycyl-L-lysine(in) + 2 H(+)(in). It catalyses the reaction glycyl-L-glutamate(out) + 3 H(+)(out) = glycyl-L-glutamate(in) + 3 H(+)(in). The enzyme catalyses L-alanyl-L-alanine(out) + 2 H(+)(out) = L-alanyl-L-alanine(in) + 2 H(+)(in). The catalysed reaction is an L-amino acid tripeptide(out) + 2 H(+)(out) = an L-amino acid tripeptide(in) + 2 H(+)(in). It carries out the reaction carnosine(out) + 2 H(+)(out) = carnosine(in) + 2 H(+)(in). Its function is as follows. Proton-coupled amino-acid transporter that transports oligopeptides of 2 to 4 amino acids with a preference for dipeptides. Transports neutral and anionic dipeptides with a proton to peptide stoichiometry of 2:1 or 3:1. In kidney, involved in the absorption of circulating di- and tripeptides from the glomerular filtrate. Can also transport beta-lactam antibiotics, such as the aminocephalosporin cefadroxil, and other antiviral and anticancer drugs. Transports the dipeptide-like aminopeptidase inhibitor bestatin. Also able to transport carnosine. Involved in innate immunity by promoting the detection of microbial pathogens by NOD-like receptors (NLRs). Mediates transport of bacterial peptidoglycans across the plasma membrane or, in macrophages, the phagosome membrane: catalyzes the transport of certain bacterial peptidoglycans, such as muramyl dipeptide (MDP), the NOD2 ligand. This chain is Solute carrier family 15 member 2, found in Oryctolagus cuniculus (Rabbit).